Reading from the N-terminus, the 284-residue chain is 4-hydroxybenzoate octaprenyltransferase (284 aa).

Transmembrane regions (helical) follow at residues 33 to 53 (VIAA…LGVF), 93 to 113 (IGLF…MNPL), 136 to 156 (YLPQ…AWAA), 159 to 179 (GELP…TIAY), 209 to 229 (LVIG…GQHY), 231 to 248 (LGQS…LFVY), and 264 to 284 (AFLN…IAFW).

The protein belongs to the UbiA prenyltransferase family. Mg(2+) serves as cofactor.

The protein resides in the cell inner membrane. It catalyses the reaction all-trans-octaprenyl diphosphate + 4-hydroxybenzoate = 4-hydroxy-3-(all-trans-octaprenyl)benzoate + diphosphate. It participates in cofactor biosynthesis; ubiquinone biosynthesis. Its function is as follows. Catalyzes the prenylation of para-hydroxybenzoate (PHB) with an all-trans polyprenyl group. Mediates the second step in the final reaction sequence of ubiquinone-8 (UQ-8) biosynthesis, which is the condensation of the polyisoprenoid side chain with PHB, generating the first membrane-bound Q intermediate 3-octaprenyl-4-hydroxybenzoate. This chain is 4-hydroxybenzoate octaprenyltransferase, found in Vibrio campbellii (strain ATCC BAA-1116).